Reading from the N-terminus, the 1371-residue chain is Major capsid protein (1371 aa).

Belongs to the herpesviridae major capsid protein family. In terms of assembly, homomultimer. Makes the hexons and eleven out of twelve pentons. Interacts with triplex proteins 1/TRX1 and 2/TRX2; adjacent capsomers are linked together in groups of three by triplexes, heterotrimeric complexes composed of one molecule of TRX1 and two molecules of TRX2. Interacts with scaffold protein; this interaction allows efficient MCP transport to the host nucleus. Interacts with capsid vertex component 2/CVC2. Interacts with the small capsomere-interacting protein/SCP.

The protein localises to the virion. It is found in the host nucleus. Its function is as follows. Self-assembles to form an icosahedral capsid with a T=16 symmetry, about 200 nm in diameter, and consisting of 150 hexons and 12 pentons (total of 162 capsomers). Hexons form the edges and faces of the capsid and are each composed of six MCP molecules. In contrast, one penton is found at each of the 12 vertices. Eleven of the pentons are MCP pentamers, while the last vertex is occupied by the portal complex. The capsid is surrounded by a layer of proteinaceous material designated the tegument which, in turn, is enclosed in an envelope of host cell-derived lipids containing virus-encoded glycoproteins. The polypeptide is Major capsid protein (Saimiriine herpesvirus 2 (strain 11) (SaHV-2)).